The primary structure comprises 452 residues: Bifunctional protein GlmU (452 aa).

The tract at residues Met-1–Arg-226 is pyrophosphorylase. UDP-N-acetyl-alpha-D-glucosamine contacts are provided by residues Leu-8 to Gly-11, Lys-22, Gln-73, Gly-78 to Thr-79, Tyr-99 to Asp-101, Gly-136, Glu-151, Asn-166, and Asn-224. Mg(2+) is bound at residue Asp-101. Mg(2+) is bound at residue Asn-224. A linker region spans residues Val-227–Asp-247. The interval Gly-248–Gly-452 is N-acetyltransferase. Positions 330 and 348 each coordinate UDP-N-acetyl-alpha-D-glucosamine. The active-site Proton acceptor is His-360. 2 residues coordinate UDP-N-acetyl-alpha-D-glucosamine: Tyr-363 and Asn-374. Acetyl-CoA contacts are provided by residues Ala-377, Asn-383–Tyr-384, Ser-402, Ala-420, and Arg-437.

It in the N-terminal section; belongs to the N-acetylglucosamine-1-phosphate uridyltransferase family. This sequence in the C-terminal section; belongs to the transferase hexapeptide repeat family. As to quaternary structure, homotrimer. It depends on Mg(2+) as a cofactor.

Its subcellular location is the cytoplasm. The catalysed reaction is alpha-D-glucosamine 1-phosphate + acetyl-CoA = N-acetyl-alpha-D-glucosamine 1-phosphate + CoA + H(+). The enzyme catalyses N-acetyl-alpha-D-glucosamine 1-phosphate + UTP + H(+) = UDP-N-acetyl-alpha-D-glucosamine + diphosphate. The protein operates within nucleotide-sugar biosynthesis; UDP-N-acetyl-alpha-D-glucosamine biosynthesis; N-acetyl-alpha-D-glucosamine 1-phosphate from alpha-D-glucosamine 6-phosphate (route II): step 2/2. It functions in the pathway nucleotide-sugar biosynthesis; UDP-N-acetyl-alpha-D-glucosamine biosynthesis; UDP-N-acetyl-alpha-D-glucosamine from N-acetyl-alpha-D-glucosamine 1-phosphate: step 1/1. Its pathway is bacterial outer membrane biogenesis; LPS lipid A biosynthesis. Functionally, catalyzes the last two sequential reactions in the de novo biosynthetic pathway for UDP-N-acetylglucosamine (UDP-GlcNAc). The C-terminal domain catalyzes the transfer of acetyl group from acetyl coenzyme A to glucosamine-1-phosphate (GlcN-1-P) to produce N-acetylglucosamine-1-phosphate (GlcNAc-1-P), which is converted into UDP-GlcNAc by the transfer of uridine 5-monophosphate (from uridine 5-triphosphate), a reaction catalyzed by the N-terminal domain. The protein is Bifunctional protein GlmU of Alcanivorax borkumensis (strain ATCC 700651 / DSM 11573 / NCIMB 13689 / SK2).